The primary structure comprises 230 residues: Phosphoribosylaminoimidazole-succinocarboxamide synthase (230 aa).

This sequence belongs to the SAICAR synthetase family.

The catalysed reaction is 5-amino-1-(5-phospho-D-ribosyl)imidazole-4-carboxylate + L-aspartate + ATP = (2S)-2-[5-amino-1-(5-phospho-beta-D-ribosyl)imidazole-4-carboxamido]succinate + ADP + phosphate + 2 H(+). It functions in the pathway purine metabolism; IMP biosynthesis via de novo pathway; 5-amino-1-(5-phospho-D-ribosyl)imidazole-4-carboxamide from 5-amino-1-(5-phospho-D-ribosyl)imidazole-4-carboxylate: step 1/2. The polypeptide is Phosphoribosylaminoimidazole-succinocarboxamide synthase (Thermotoga petrophila (strain ATCC BAA-488 / DSM 13995 / JCM 10881 / RKU-1)).